A 540-amino-acid chain; its full sequence is Peptide chain release factor 3 (540 aa).

One can recognise a tr-type G domain in the interval 14–283 (ELRRNFAIIS…YFLNYALKPG (270 aa)). GTP contacts are provided by residues 23–30 (SHPDAGKT), 91–95 (DTPGH), and 145–148 (NKLD).

It belongs to the TRAFAC class translation factor GTPase superfamily. Classic translation factor GTPase family. PrfC subfamily.

Its subcellular location is the cytoplasm. In terms of biological role, increases the formation of ribosomal termination complexes and stimulates activities of RF-1 and RF-2. It binds guanine nucleotides and has strong preference for UGA stop codons. It may interact directly with the ribosome. The stimulation of RF-1 and RF-2 is significantly reduced by GTP and GDP, but not by GMP. This Trichormus variabilis (strain ATCC 29413 / PCC 7937) (Anabaena variabilis) protein is Peptide chain release factor 3.